Consider the following 390-residue polypeptide: MDRSQEHYANGDQNLEANLIDHEVVTESSSSAVPQTENYKRWLRVSIYVIFVLFCQPLATILGRLYYENGGNSTYVVTLLQLIGFPVLVLFRFFSRIRQPKSTDTNFSQSPSFTTLASVYLCTGLLVSAYAYLSAVGLLYLPVSTFSLILASQLAFTAFFSYFLNSQKFTPLIVSSLLLLTVSSALLVVNTDSENSTNVSRVQYVIGFICTIGASAGIGLLLSLIQMLFRKVFTKHTSSAVTDLAIYQSLVASCVVLIGLFASGEWETLPSEMRNYKLGKVSYVLTLASAAISWQVYTLGLVGLIFESSSVFSNSITAVGLPIVPVAAVIVFHDRMDASKIFSIILAICGFLSFVYQHYLDEKKLNTSHTSAVGDLHLPVEEGHTNIQSV.

Helical transmembrane passes span 42 to 62 (WLRVSIYVIFVLFCQPLATIL), 74 to 94 (TYVVTLLQLIGFPVLVLFRFF), 110 to 130 (SPSFTTLASVYLCTGLLVSAY), 131 to 151 (AYLSAVGLLYLPVSTFSLILA), 169 to 189 (FTPLIVSSLLLLTVSSALLVV), 205 to 225 (VIGFICTIGASAGIGLLLSLI), 244 to 264 (LAIYQSLVASCVVLIGLFASG), 286 to 306 (TLASAAISWQVYTLGLVGLIF), 312 to 332 (FSNSITAVGLPIVPVAAVIVF), and 341 to 361 (IFSIILAICGFLSFVYQHYLD).

It belongs to the purine permeases (TC 2.A.7.14) family.

Its subcellular location is the membrane. The sequence is that of Probable purine permease 7 (PUP7) from Arabidopsis thaliana (Mouse-ear cress).